The sequence spans 133 residues: FPRL1 inhibitory protein (133 aa).

The N-terminal stretch at Met1 to Ala28 is a signal peptide.

The protein belongs to the CHIPS/FLIPr family.

The protein resides in the secreted. Its function is as follows. May be involved in countering the first line of host defense mechanisms. Impairs the leukocyte response to FPRL1 agonists by binding directly to host FPRL1. This Staphylococcus aureus (strain USA300) protein is FPRL1 inhibitory protein (flr).